Consider the following 174-residue polypeptide: NADH-ubiquinone oxidoreductase chain 6 (174 aa).

Helical transmembrane passes span 1–21 (MTYV…GFSS), 24–44 (SPIY…AIIL), 47–67 (GGGY…MVVF), 86–106 (VEVL…VLWV), and 151–171 (WLVV…IEIA).

Belongs to the complex I subunit 6 family. As to quaternary structure, core subunit of respiratory chain NADH dehydrogenase (Complex I) which is composed of 45 different subunits.

It is found in the mitochondrion inner membrane. It catalyses the reaction a ubiquinone + NADH + 5 H(+)(in) = a ubiquinol + NAD(+) + 4 H(+)(out). In terms of biological role, core subunit of the mitochondrial membrane respiratory chain NADH dehydrogenase (Complex I) which catalyzes electron transfer from NADH through the respiratory chain, using ubiquinone as an electron acceptor. Essential for the catalytic activity and assembly of complex I. In Gorilla gorilla gorilla (Western lowland gorilla), this protein is NADH-ubiquinone oxidoreductase chain 6 (MT-ND6).